Here is a 373-residue protein sequence, read N- to C-terminus: D-amino-acid transaminase, chloroplastic (373 aa).

A chloroplast-targeting transit peptide spans 1–57 (MAGLSLEFTVNTWNLRSLSQVPCPLRHGFRFPRRLTRRRTILMCSDSSSQSWNVPVL). Residue arginine 128 coordinates pyridoxal 5'-phosphate. Residue lysine 222 is the Proton acceptor of the active site. At lysine 222 the chain carries N6-(pyridoxal phosphate)lysine. Residue glutamate 255 participates in pyridoxal 5'-phosphate binding.

This sequence belongs to the class-IV pyridoxal-phosphate-dependent aminotransferase family. Homodimer. Pyridoxal 5'-phosphate serves as cofactor.

The protein resides in the plastid. It localises to the chloroplast. It catalyses the reaction D-alanine + 2-oxoglutarate = D-glutamate + pyruvate. It carries out the reaction 4-amino-4-deoxychorismate = 4-aminobenzoate + pyruvate + H(+). It participates in cofactor biosynthesis; tetrahydrofolate biosynthesis; 4-aminobenzoate from chorismate: step 2/2. Inhibited by hydroxylamine or amino-oxyacetic acid. Its function is as follows. Amino acid aminotransferase showing activity for D-Asp and D-Ala as amino donors with 2-oxoglutarate as an amino acceptor. Can also use D-Met, D-Tyr, D-Phe, D-Gln, D-Trp and D-Asn as substrates, but no activity with L-Asp, L-Ala, L-Leu, L-Ile or L-Val. Also catalyzes the reverse reaction where an amino group is transferred from D-Glu to pyruvate or oxaloacetate to produce D-Ala or D-Asp, respectively. Also involved in folate biosynthesis, acting as an aminodeoxychorismate lyase converting 4-amino-4-deoxychorismate (ADC) to p-aminobenzoate (PABA). The polypeptide is D-amino-acid transaminase, chloroplastic (Arabidopsis thaliana (Mouse-ear cress)).